We begin with the raw amino-acid sequence, 375 residues long: Queuine tRNA-ribosyltransferase (375 aa).

The active-site Proton acceptor is Asp93. Substrate contacts are provided by residues 93-97 (DSGGY), Asp147, Gln194, and Gly221. Positions 252–258 (GVGKPDD) are RNA binding. Residue Asp271 is the Nucleophile of the active site. The tract at residues 276 to 280 (TRSGR) is RNA binding; important for wobble base 34 recognition. Positions 309, 311, 314, and 340 each coordinate Zn(2+).

The protein belongs to the queuine tRNA-ribosyltransferase family. As to quaternary structure, homodimer. Within each dimer, one monomer is responsible for RNA recognition and catalysis, while the other monomer binds to the replacement base PreQ1. It depends on Zn(2+) as a cofactor.

It catalyses the reaction 7-aminomethyl-7-carbaguanine + guanosine(34) in tRNA = 7-aminomethyl-7-carbaguanosine(34) in tRNA + guanine. It functions in the pathway tRNA modification; tRNA-queuosine biosynthesis. Catalyzes the base-exchange of a guanine (G) residue with the queuine precursor 7-aminomethyl-7-deazaguanine (PreQ1) at position 34 (anticodon wobble position) in tRNAs with GU(N) anticodons (tRNA-Asp, -Asn, -His and -Tyr). Catalysis occurs through a double-displacement mechanism. The nucleophile active site attacks the C1' of nucleotide 34 to detach the guanine base from the RNA, forming a covalent enzyme-RNA intermediate. The proton acceptor active site deprotonates the incoming PreQ1, allowing a nucleophilic attack on the C1' of the ribose to form the product. After dissociation, two additional enzymatic reactions on the tRNA convert PreQ1 to queuine (Q), resulting in the hypermodified nucleoside queuosine (7-(((4,5-cis-dihydroxy-2-cyclopenten-1-yl)amino)methyl)-7-deazaguanosine). This chain is Queuine tRNA-ribosyltransferase, found in Sphingopyxis alaskensis (strain DSM 13593 / LMG 18877 / RB2256) (Sphingomonas alaskensis).